A 409-amino-acid polypeptide reads, in one-letter code: Arginine deiminase (409 aa).

The Amidino-cysteine intermediate role is filled by Cys399.

Belongs to the arginine deiminase family.

It localises to the cytoplasm. The enzyme catalyses L-arginine + H2O = L-citrulline + NH4(+). Its pathway is amino-acid degradation; L-arginine degradation via ADI pathway; carbamoyl phosphate from L-arginine: step 1/2. This Streptococcus pneumoniae (strain 70585) protein is Arginine deiminase.